The chain runs to 876 residues: Alanine--tRNA ligase (876 aa).

His568, His572, Cys670, and His674 together coordinate Zn(2+).

It belongs to the class-II aminoacyl-tRNA synthetase family. Zn(2+) is required as a cofactor.

The protein resides in the cytoplasm. The enzyme catalyses tRNA(Ala) + L-alanine + ATP = L-alanyl-tRNA(Ala) + AMP + diphosphate. In terms of biological role, catalyzes the attachment of alanine to tRNA(Ala) in a two-step reaction: alanine is first activated by ATP to form Ala-AMP and then transferred to the acceptor end of tRNA(Ala). Also edits incorrectly charged Ser-tRNA(Ala) and Gly-tRNA(Ala) via its editing domain. This chain is Alanine--tRNA ligase, found in Geobacter metallireducens (strain ATCC 53774 / DSM 7210 / GS-15).